Consider the following 211-residue polypeptide: Urease accessory protein UreF (211 aa).

The segment at 71-93 (DDADRETDARTPAPAARHASRSQ) is disordered.

Belongs to the UreF family. UreD, UreF and UreG form a complex that acts as a GTP-hydrolysis-dependent molecular chaperone, activating the urease apoprotein by helping to assemble the nickel containing metallocenter of UreC. The UreE protein probably delivers the nickel.

It is found in the cytoplasm. Required for maturation of urease via the functional incorporation of the urease nickel metallocenter. This Mycobacterium bovis (strain ATCC BAA-935 / AF2122/97) protein is Urease accessory protein UreF.